The following is a 323-amino-acid chain: Homoserine kinase (323 aa).

The protein belongs to the pseudomonas-type ThrB family.

The enzyme catalyses L-homoserine + ATP = O-phospho-L-homoserine + ADP + H(+). It functions in the pathway amino-acid biosynthesis; L-threonine biosynthesis; L-threonine from L-aspartate: step 4/5. The chain is Homoserine kinase from Phenylobacterium zucineum (strain HLK1).